The primary structure comprises 613 residues: Probable potassium transport system protein Kup (613 aa).

11 helical membrane passes run 38 to 58 (VLGV…LKYL), 91 to 111 (WILV…GMIT), 128 to 148 (PSFG…LFLF), 159 to 179 (FFGP…LVEI), 206 to 226 (FLVL…YADM), 238 to 258 (WSLL…AVLL), 270 to 290 (ALVP…ATII), 328 to 348 (IYVP…VAGF), 357 to 377 (AYGV…YYVA), 387 to 407 (GLNL…GASV), and 410 to 430 (LFHG…LMLT).

The protein belongs to the HAK/KUP transporter (TC 2.A.72) family.

It localises to the cell inner membrane. It carries out the reaction K(+)(in) + H(+)(in) = K(+)(out) + H(+)(out). Transport of potassium into the cell. Likely operates as a K(+):H(+) symporter. The polypeptide is Probable potassium transport system protein Kup (Chlorobaculum tepidum (strain ATCC 49652 / DSM 12025 / NBRC 103806 / TLS) (Chlorobium tepidum)).